The primary structure comprises 399 residues: 4-hydroxy-3-methylbut-2-enyl diphosphate reductase (399 aa).

Cys-66 serves as a coordination point for [4Fe-4S] cluster. His-96 lines the (2E)-4-hydroxy-3-methylbut-2-enyl diphosphate pocket. His-96 is a dimethylallyl diphosphate binding site. His-96 contributes to the isopentenyl diphosphate binding site. [4Fe-4S] cluster is bound at residue Cys-157. Position 185 (His-185) interacts with (2E)-4-hydroxy-3-methylbut-2-enyl diphosphate. A dimethylallyl diphosphate-binding site is contributed by His-185. An isopentenyl diphosphate-binding site is contributed by His-185. The active-site Proton donor is the Glu-187. Thr-250 serves as a coordination point for (2E)-4-hydroxy-3-methylbut-2-enyl diphosphate. Cys-288 is a binding site for [4Fe-4S] cluster. Ser-317, Ser-318, Asn-319, and Ser-380 together coordinate (2E)-4-hydroxy-3-methylbut-2-enyl diphosphate. Dimethylallyl diphosphate contacts are provided by Ser-317, Ser-318, Asn-319, and Ser-380. Residues Ser-317, Ser-318, Asn-319, and Ser-380 each coordinate isopentenyl diphosphate.

It belongs to the IspH family. The cofactor is [4Fe-4S] cluster.

The catalysed reaction is isopentenyl diphosphate + 2 oxidized [2Fe-2S]-[ferredoxin] + H2O = (2E)-4-hydroxy-3-methylbut-2-enyl diphosphate + 2 reduced [2Fe-2S]-[ferredoxin] + 2 H(+). The enzyme catalyses dimethylallyl diphosphate + 2 oxidized [2Fe-2S]-[ferredoxin] + H2O = (2E)-4-hydroxy-3-methylbut-2-enyl diphosphate + 2 reduced [2Fe-2S]-[ferredoxin] + 2 H(+). Its pathway is isoprenoid biosynthesis; dimethylallyl diphosphate biosynthesis; dimethylallyl diphosphate from (2E)-4-hydroxy-3-methylbutenyl diphosphate: step 1/1. It participates in isoprenoid biosynthesis; isopentenyl diphosphate biosynthesis via DXP pathway; isopentenyl diphosphate from 1-deoxy-D-xylulose 5-phosphate: step 6/6. Functionally, catalyzes the conversion of 1-hydroxy-2-methyl-2-(E)-butenyl 4-diphosphate (HMBPP) into a mixture of isopentenyl diphosphate (IPP) and dimethylallyl diphosphate (DMAPP). Acts in the terminal step of the DOXP/MEP pathway for isoprenoid precursor biosynthesis. This Synechococcus sp. (strain CC9605) protein is 4-hydroxy-3-methylbut-2-enyl diphosphate reductase.